Reading from the N-terminus, the 731-residue chain is T-cell activation Rho GTPase-activating protein (731 aa).

A Rho-GAP domain is found at 88–277; it reads QPLSIICGDS…FLIDNCFEIF (190 aa). Disordered regions lie at residues 288–421, 464–507, and 641–662; these read TSDD…AEDP, SLDA…IKKH, and HHVE…GLSP. Polar residues predominate over residues 299–311; sequence SDVSTLQNDSAYD. Low complexity predominate over residues 319–329; it reads SNSSSGISSPS. Residues 380-399 are compositionally biased toward polar residues; it reads SMPSSQECLESRVTNQTLTK. At S400 the chain carries Phosphoserine. The segment covering 464-480 has biased composition (low complexity); that stretch reads SLDASSDSSPVASPSSP. Composition is skewed to basic and acidic residues over residues 494–503 and 641–652; these read KTEKGKPSRE and HHVEDSRHRGSK.

In terms of biological role, may function as a GTPase-activating protein and may play important roles during T-cell activation. This Homo sapiens (Human) protein is T-cell activation Rho GTPase-activating protein (TAGAP).